Consider the following 155-residue polypeptide: Large ribosomal subunit protein eL24 (155 aa).

A disordered region spans residues 92–155; the sequence is AKRNMKPEVR…KSAPRVGGKR (64 aa). The segment covering 96–117 has biased composition (basic and acidic residues); that stretch reads MKPEVRKAQRDQAIKAAKEQKK. Residues 124–133 show a composition bias toward low complexity; it reads KASAPAPKAK.

The protein belongs to the eukaryotic ribosomal protein eL24 family.

The chain is Large ribosomal subunit protein eL24 (RpL24) from Spodoptera frugiperda (Fall armyworm).